The following is a 560-amino-acid chain: Diphtheria toxin homolog CRM228 (560 aa).

A signal peptide spans 1-25 (MSRKLFASILIGALLGIGAPPSAHA). NAD(+) is bound by residues H46 and Y90. E173 is an active-site residue. Intrachain disulfides connect C211-C226 and C486-C496.

The protein is Diphtheria toxin homolog CRM228 of Corynebacterium diphtheriae.